The primary structure comprises 160 residues: Phosphopantetheine adenylyltransferase (160 aa).

Residue Ser-9 participates in substrate binding. ATP contacts are provided by residues 9 to 10 (SF) and His-17. 3 residues coordinate substrate: Lys-41, Ile-73, and Lys-87. Residues 88 to 90 (GLR), Glu-98, and 122 to 128 (YSFVSSS) contribute to the ATP site.

This sequence belongs to the bacterial CoaD family. As to quaternary structure, homohexamer. The cofactor is Mg(2+).

It localises to the cytoplasm. It carries out the reaction (R)-4'-phosphopantetheine + ATP + H(+) = 3'-dephospho-CoA + diphosphate. It participates in cofactor biosynthesis; coenzyme A biosynthesis; CoA from (R)-pantothenate: step 4/5. Its function is as follows. Reversibly transfers an adenylyl group from ATP to 4'-phosphopantetheine, yielding dephospho-CoA (dPCoA) and pyrophosphate. The polypeptide is Phosphopantetheine adenylyltransferase (Mycolicibacterium gilvum (strain PYR-GCK) (Mycobacterium gilvum (strain PYR-GCK))).